Consider the following 97-residue polypeptide: Putative membrane protein insertion efficiency factor (97 aa).

The interval 72-97 (VPGAEPDQEQHQCTPLCNHHSEDHSQ) is disordered.

It belongs to the UPF0161 family.

The protein localises to the cell inner membrane. Its function is as follows. Could be involved in insertion of integral membrane proteins into the membrane. This Alcanivorax borkumensis (strain ATCC 700651 / DSM 11573 / NCIMB 13689 / SK2) protein is Putative membrane protein insertion efficiency factor.